Reading from the N-terminus, the 506-residue chain is GMP synthase [glutamine-hydrolyzing] (506 aa).

Residues 2–190 form the Glutamine amidotransferase type-1 domain; the sequence is SIVILDFGSQ…FLDICGVTRD (189 aa). Residue C79 is the Nucleophile of the active site. Catalysis depends on residues H165 and E167. The 191-residue stretch at 191–381 folds into the GMPS ATP-PPase domain; it reads WNAEHIVDEL…LGLPDHIRMR (191 aa). An ATP-binding site is contributed by 219-225; sequence SGGVDSS.

Homodimer.

The enzyme catalyses XMP + L-glutamine + ATP + H2O = GMP + L-glutamate + AMP + diphosphate + 2 H(+). The protein operates within purine metabolism; GMP biosynthesis; GMP from XMP (L-Gln route): step 1/1. Functionally, catalyzes the synthesis of GMP from XMP. This chain is GMP synthase [glutamine-hydrolyzing] (guaA), found in Deinococcus radiodurans (strain ATCC 13939 / DSM 20539 / JCM 16871 / CCUG 27074 / LMG 4051 / NBRC 15346 / NCIMB 9279 / VKM B-1422 / R1).